Here is a 327-residue protein sequence, read N- to C-terminus: Phenylalanine--tRNA ligase alpha subunit (327 aa).

Glu252 serves as a coordination point for Mg(2+).

This sequence belongs to the class-II aminoacyl-tRNA synthetase family. Phe-tRNA synthetase alpha subunit type 1 subfamily. As to quaternary structure, tetramer of two alpha and two beta subunits. The cofactor is Mg(2+).

It localises to the cytoplasm. It carries out the reaction tRNA(Phe) + L-phenylalanine + ATP = L-phenylalanyl-tRNA(Phe) + AMP + diphosphate + H(+). This chain is Phenylalanine--tRNA ligase alpha subunit, found in Klebsiella pneumoniae subsp. pneumoniae (strain ATCC 700721 / MGH 78578).